Consider the following 164-residue polypeptide: CASP-like protein 1C1 (164 aa).

The Cytoplasmic segment spans residues 1–15 (MGDVEIPPLVKQIVR). A helical membrane pass occupies residues 16–36 (GLRGLAFLATILATSFMAASH). Over 37-56 (ERAIFPFDYKADYTDLMLFK) the chain is Extracellular. The chain crosses the membrane as a helical span at residues 57 to 77 (AFLGANIAASLYSFFFVCLPP). Over 78 to 83 (KSLLWR) the chain is Cytoplasmic. Residues 84–104 (LAIVLDVIMFGLLVAMDSAAI) form a helical membrane-spanning segment. Residues 105-132 (AAAYLHKHGDSQAFWPPICSQVPTYCYR) are Extracellular-facing. A helical membrane pass occupies residues 133 to 153 (VILAISIGFGGVFMFLLIIII). At 154 to 164 (SISVILNPLLV) the chain is on the cytoplasmic side.

This sequence belongs to the Casparian strip membrane proteins (CASP) family. In terms of assembly, homodimer and heterodimers.

The protein resides in the cell membrane. The protein is CASP-like protein 1C1 of Populus trichocarpa (Western balsam poplar).